Reading from the N-terminus, the 359-residue chain is MITVNVDLGDRAYPIHIGAGLIGRTELFAPHIKGSSVTIVTNTTVDPLYGDALRAALAPLGKRVSTVVLPDGEAYKNWETLNLIFDGLLTDHADRKTTLVALGGGVVGDMTGFAAACYMRGVPFIQVPTTLLSQVDSSVGGKTGINHPLGKNMIGAFYQPQAVIADIGALTTLPDRELAAGVAEVIKTGAIADAEFFDWIEANVEALNRREPAALAHAVKRSCEIKASVVAADEREGGLRAILNFGHTFGHAIEAGLGYGEWLHGEAVGCGMVMAGDLSVRLGLLDEASRQRLDAVIAAAHLPTRAPALGDARYMDLMRVDKKAEAGAIKFILLKRFGDTLITQAPDEAVFATLAQTTR.

NAD(+) is bound by residues 71–76 (DGEAYK), 105–109 (GVVGD), 129–130 (TT), Lys142, and Lys151. Glu184, His247, and His264 together coordinate Zn(2+).

It belongs to the sugar phosphate cyclases superfamily. Dehydroquinate synthase family. The cofactor is Co(2+). Requires Zn(2+) as cofactor. It depends on NAD(+) as a cofactor.

Its subcellular location is the cytoplasm. The catalysed reaction is 7-phospho-2-dehydro-3-deoxy-D-arabino-heptonate = 3-dehydroquinate + phosphate. Its pathway is metabolic intermediate biosynthesis; chorismate biosynthesis; chorismate from D-erythrose 4-phosphate and phosphoenolpyruvate: step 2/7. Functionally, catalyzes the conversion of 3-deoxy-D-arabino-heptulosonate 7-phosphate (DAHP) to dehydroquinate (DHQ). The protein is 3-dehydroquinate synthase of Burkholderia cenocepacia (strain ATCC BAA-245 / DSM 16553 / LMG 16656 / NCTC 13227 / J2315 / CF5610) (Burkholderia cepacia (strain J2315)).